A 90-amino-acid chain; its full sequence is Defensin-like protein 193 (90 aa).

The N-terminal stretch at 1 to 27 (MAMKSVSTLAVFAILFLVIVEMPEIKA) is a signal peptide. 4 disulfides stabilise this stretch: C32–C86, C45–C69, C54–C81, and C58–C83.

Belongs to the DEFL family. Protease inhibitor I18 (RTI/MTI-2) subfamily.

The protein localises to the secreted. This is Defensin-like protein 193 (ATTI2) from Arabidopsis thaliana (Mouse-ear cress).